We begin with the raw amino-acid sequence, 170 residues long: Glycine cleavage system H protein, mitochondrial (170 aa).

The transit peptide at 1–45 directs the protein to the mitochondrion; sequence MSLRVVRSVRAVACSLRIALASCPPRPWAPSAAAVRSLRTGSALL. A Lipoyl-binding domain is found at 63-145; that stretch reads IGTVGISNFA…YEDGWLIKMT (83 aa). An N6-lipoyllysine modification is found at K104.

It belongs to the GcvH family. The glycine cleavage system is composed of four proteins: P (GLDC), T (GCST), L (DLD) and H (GCSH). Interacts with GLDC. The cofactor is (R)-lipoate.

It localises to the mitochondrion. The glycine cleavage system catalyzes the degradation of glycine. The H protein (GCSH) shuttles the methylamine group of glycine from the P protein (GLDC) to the T protein (GCST). Has a pivotal role in the lipoylation of enzymes involved in cellular energetics such as the mitochondrial dihydrolipoyllysine-residue acetyltransferase component of pyruvate dehydrogenase complex (DLAT), and the mitochondrial dihydrolipoyllysine-residue succinyltransferase component of 2-oxoglutarate dehydrogenase complex (DLST). The chain is Glycine cleavage system H protein, mitochondrial from Rattus norvegicus (Rat).